A 491-amino-acid chain; its full sequence is Glutamyl-tRNA(Gln) amidotransferase subunit A (491 aa).

Active-site charge relay system residues include Lys76 and Ser154. The active-site Acyl-ester intermediate is Ser178.

This sequence belongs to the amidase family. GatA subfamily. In terms of assembly, heterotrimer of A, B and C subunits.

It catalyses the reaction L-glutamyl-tRNA(Gln) + L-glutamine + ATP + H2O = L-glutaminyl-tRNA(Gln) + L-glutamate + ADP + phosphate + H(+). Allows the formation of correctly charged Gln-tRNA(Gln) through the transamidation of misacylated Glu-tRNA(Gln) in organisms which lack glutaminyl-tRNA synthetase. The reaction takes place in the presence of glutamine and ATP through an activated gamma-phospho-Glu-tRNA(Gln). This chain is Glutamyl-tRNA(Gln) amidotransferase subunit A, found in Cereibacter sphaeroides (strain ATCC 17025 / ATH 2.4.3) (Rhodobacter sphaeroides).